A 36-amino-acid chain; its full sequence is Potassium channel toxin alpha-KTx 1.9 (36 aa).

Belongs to the short scorpion toxin superfamily. Potassium channel inhibitor family. Alpha-KTx 01 subfamily. In terms of tissue distribution, expressed by the venom gland.

Its subcellular location is the secreted. Potent selective inhibitor of Kv1/KCNA voltage-gated potassium channels. The sequence is that of Potassium channel toxin alpha-KTx 1.9 from Centruroides limbatus (Bark scorpion).